Consider the following 393-residue polypeptide: PPE family protein PPE26 (393 aa).

This sequence belongs to the mycobacterial PPE family. Interacts with human TLR2.

Probably plays a key role in regulating innate and adaptive immune responses through human Toll-like receptor 2 (TLR2). Interacts with TLR2, leading to the subsequent activation of the mitogen-activated protein kinase (MAPK) and nuclear factor kappa B (NF-kappa-B) signaling pathways. Stimulates macrophage activation by augmenting pro-inflammatory cytokine production (TNF-alpha, IL-6 and IL-12p40) and the expression of cell surface molecules (CD80, CD86, MHC class I and II). Also participates in adaptive immunity by directing Th1-polarised immune responses. The protein is PPE family protein PPE26 of Mycobacterium tuberculosis (strain ATCC 25618 / H37Rv).